Reading from the N-terminus, the 786-residue chain is DNA ligase (786 aa).

Residues 32 to 36, 81 to 82, and Glu121 each bind NAD(+); these read DAEYD and SL. Lys123 (N6-AMP-lysine intermediate) is an active-site residue. Residues Arg144, Glu181, Lys297, and Lys321 each contribute to the NAD(+) site. Residues Cys415, Cys418, Cys445, and Cys451 each coordinate Zn(2+). Positions 703-786 constitute a BRCT domain; the sequence is AEGLPLAGQT…EQLKSYGIEA (84 aa).

This sequence belongs to the NAD-dependent DNA ligase family. LigA subfamily. Mg(2+) serves as cofactor. It depends on Mn(2+) as a cofactor.

The catalysed reaction is NAD(+) + (deoxyribonucleotide)n-3'-hydroxyl + 5'-phospho-(deoxyribonucleotide)m = (deoxyribonucleotide)n+m + AMP + beta-nicotinamide D-nucleotide.. DNA ligase that catalyzes the formation of phosphodiester linkages between 5'-phosphoryl and 3'-hydroxyl groups in double-stranded DNA using NAD as a coenzyme and as the energy source for the reaction. It is essential for DNA replication and repair of damaged DNA. This is DNA ligase from Ectopseudomonas mendocina (strain ymp) (Pseudomonas mendocina).